A 432-amino-acid polypeptide reads, in one-letter code: Serine hydroxymethyltransferase (432 aa).

Residues Leu-127 and 131-133 (GHL) each bind (6S)-5,6,7,8-tetrahydrofolate. An N6-(pyridoxal phosphate)lysine modification is found at Lys-236.

It belongs to the SHMT family. In terms of assembly, homodimer. Pyridoxal 5'-phosphate is required as a cofactor.

It localises to the cytoplasm. It catalyses the reaction (6R)-5,10-methylene-5,6,7,8-tetrahydrofolate + glycine + H2O = (6S)-5,6,7,8-tetrahydrofolate + L-serine. It participates in one-carbon metabolism; tetrahydrofolate interconversion. The protein operates within amino-acid biosynthesis; glycine biosynthesis; glycine from L-serine: step 1/1. Functionally, catalyzes the reversible interconversion of serine and glycine with tetrahydrofolate (THF) serving as the one-carbon carrier. This reaction serves as the major source of one-carbon groups required for the biosynthesis of purines, thymidylate, methionine, and other important biomolecules. Also exhibits THF-independent aldolase activity toward beta-hydroxyamino acids, producing glycine and aldehydes, via a retro-aldol mechanism. The sequence is that of Serine hydroxymethyltransferase from Rhizobium rhizogenes (strain K84 / ATCC BAA-868) (Agrobacterium radiobacter).